Here is a 131-residue protein sequence, read N- to C-terminus: Large ribosomal subunit protein bL17 (131 aa).

It belongs to the bacterial ribosomal protein bL17 family. Part of the 50S ribosomal subunit. Contacts protein L32.

The chain is Large ribosomal subunit protein bL17 from Polynucleobacter necessarius subsp. necessarius (strain STIR1).